The chain runs to 140 residues: MLMGICALAFDFGTKSIGCAVGQSITGTAQALPAFKAQNGIPNWDSIEKCLKEWKPDILVVGLPLNMDGTEQEFTSRARKFANRLHGRFGVKVELQDERLTTTEARTEIFQRGGYKALNKSKVDGISAALILESWFERHS.

This sequence belongs to the YqgF nuclease family.

The protein localises to the cytoplasm. Could be a nuclease involved in processing of the 5'-end of pre-16S rRNA. This is Putative pre-16S rRNA nuclease from Mannheimia succiniciproducens (strain KCTC 0769BP / MBEL55E).